Consider the following 241-residue polypeptide: MKKLLSILAVFGVSAVGTTSVVACNKTESNNLSIVKTIAVPATVATANPKQVTNAEIKTALEANVLKAVQGVVKTATAADFQFDVYQDNKGTSLTTINLEEGNVEVYVQITPAKDKTVVIGETGYIKVTLPKIKVDISGVVIDQQIVEIKAADPKQVTKDELNAVNTYATLASAVLEAIKNKAPNAGASDFEITNNCDAGDYSAQKDVKVTVKAKDESPNISGEFKVNAKVKATLAPPKAG.

The first 23 residues, 1 to 23 (MKKLLSILAVFGVSAVGTTSVVA), serve as a signal peptide directing secretion. The N-palmitoyl cysteine moiety is linked to residue Cys-24. Residue Cys-24 is the site of S-diacylglycerol cysteine attachment.

Belongs to the spiralin family. Seems to occur as dimer, tetramers, and large oligomers of identical chains. Post-translationally, palmitate and stearate are the major lipid components.

The protein resides in the cell membrane. Functionally, major membrane protein of spiroplasma. In Spiroplasma citri, this protein is Spiralin (spi).